Here is a 495-residue protein sequence, read N- to C-terminus: Adenosylhomocysteinase (495 aa).

Residues Thr71, Asp156, and Glu218 each coordinate substrate. 219–221 (TTT) lines the NAD(+) pocket. Residues Lys248 and Asp252 each coordinate substrate. NAD(+) is bound by residues Asn253, 282-287 (GYGDVG), Glu305, Asn340, 361-363 (IGH), and Asn409.

It belongs to the adenosylhomocysteinase family. Requires NAD(+) as cofactor.

It localises to the cytoplasm. The enzyme catalyses S-adenosyl-L-homocysteine + H2O = L-homocysteine + adenosine. It participates in amino-acid biosynthesis; L-homocysteine biosynthesis; L-homocysteine from S-adenosyl-L-homocysteine: step 1/1. Its function is as follows. May play a key role in the regulation of the intracellular concentration of adenosylhomocysteine. This is Adenosylhomocysteinase from Mycobacterium bovis (strain ATCC BAA-935 / AF2122/97).